We begin with the raw amino-acid sequence, 141 residues long: Molybdopterin synthase catalytic subunit 2 (141 aa).

Substrate is bound by residues 37 to 39 (MIR), 103 to 104 (HR), Lys119, and 126 to 128 (KHQ).

The protein belongs to the MoaE family. Heterotetramer of 2 MoaD subunits and 2 MoaE subunits. Also stable as homodimer. The enzyme changes between these two forms during catalysis.

It carries out the reaction 2 [molybdopterin-synthase sulfur-carrier protein]-C-terminal-Gly-aminoethanethioate + cyclic pyranopterin phosphate + H2O = molybdopterin + 2 [molybdopterin-synthase sulfur-carrier protein]-C-terminal Gly-Gly + 2 H(+). The protein operates within cofactor biosynthesis; molybdopterin biosynthesis. Converts molybdopterin precursor Z into molybdopterin. This requires the incorporation of two sulfur atoms into precursor Z to generate a dithiolene group. The sulfur is provided by MoaD. The sequence is that of Molybdopterin synthase catalytic subunit 2 (moaE2) from Mycobacterium tuberculosis (strain CDC 1551 / Oshkosh).